Here is a 326-residue protein sequence, read N- to C-terminus: D-allose transport system permease protein AlsC (326 aa).

Residues 1–18 (MGFTTRVKSEASEKKPFN) lie on the Cytoplasmic side of the membrane. The chain crosses the membrane as a helical span at residues 19-39 (FALFWDKYGTFFILAIIVAIF). The Periplasmic segment spans residues 40 to 70 (GSLSPEYFLTTNNITQIFVQSSVTVLIGMGE). Residues 71–91 (FFAILVAGIDLSVGAILALSG) form a helical membrane-spanning segment. Residues 92-101 (MVTAKLMLAG) lie on the Cytoplasmic side of the membrane. The helical transmembrane segment at 102–122 (VDPFLAAMIGGVLVGGALGAI) threads the bilayer. Over 123–124 (NG) the chain is Periplasmic. The helical transmembrane segment at 125-145 (CLVNWTGLHPFIITLGTNAIF) threads the bilayer. The Cytoplasmic segment spans residues 146 to 149 (RGIT). A helical transmembrane segment spans residues 150-170 (LVISDANSVYGFSFDFVNFFA). The Periplasmic portion of the chain corresponds to 171–172 (AS). A helical transmembrane segment spans residues 173-193 (VIGIPVPVIFSLIVALILWFL). Topologically, residues 194 to 221 (TTRMRLGRNIYALGGNKNSAFYSGIDVK) are cytoplasmic. A helical transmembrane segment spans residues 222–242 (FHILVVFIISGVCAGLAGVVS). The Periplasmic portion of the chain corresponds to 243 to 252 (TARLGAAEPL). Residues 253-273 (AGMGFETYAIASAIIGGTSFF) traverse the membrane as a helical segment. Topologically, residues 274-278 (GGKGR) are cytoplasmic. Helical transmembrane passes span 279–299 (IFSV…LNIL) and 300–320 (QVQT…AVAL). Residues 321–326 (DRLISK) are Cytoplasmic-facing.

It belongs to the binding-protein-dependent transport system permease family. AraH/RbsC subfamily.

Its subcellular location is the cell inner membrane. Part of the binding-protein-dependent transport system AlsBAC for D-allose; probably responsible for the translocation of the substrate across the membrane. This Escherichia coli (strain K12) protein is D-allose transport system permease protein AlsC (alsC).